Reading from the N-terminus, the 551-residue chain is Membrane protein insertase YidC (551 aa).

A helical transmembrane segment spans residues 6–26; that stretch reads YFLWGALFISGYLLFLQWSQD. The segment covering 34-50 has biased composition (low complexity); that stretch reads SVAQSTQSQSETNSQMS. Residues 34 to 68 are disordered; the sequence is SVAQSTQSQSETNSQMSDDLPMATQSTTEANAEIP. Residues 56–68 show a composition bias toward polar residues; that stretch reads ATQSTTEANAEIP. 5 consecutive transmembrane segments (helical) span residues 340-360, 363-383, 433-453, 464-484, and 509-529; these read TVDY…LTLI, FVIN…AIFF, LGGC…YWVL, FFLW…PILM, and IMPV…VLYW.

It belongs to the OXA1/ALB3/YidC family. Type 1 subfamily. In terms of assembly, interacts with the Sec translocase complex via SecD. Specifically interacts with transmembrane segments of nascent integral membrane proteins during membrane integration.

The protein localises to the cell inner membrane. Required for the insertion and/or proper folding and/or complex formation of integral membrane proteins into the membrane. Involved in integration of membrane proteins that insert both dependently and independently of the Sec translocase complex, as well as at least some lipoproteins. Aids folding of multispanning membrane proteins. This Marinomonas sp. (strain MWYL1) protein is Membrane protein insertase YidC.